Reading from the N-terminus, the 479-residue chain is Preferentially expressed antigen in melanoma-like protein 7 (479 aa).

One copy of the LRR 1; degenerate repeat lies at 96–124 (MGRLKKVDFRDAQHHASLDMQDEREGRDY). The stretch at 179-203 (HLCCEKLEIGAVEVSKVRNVLKFLQ) is one LRR 2; degenerate repeat. The LRR 3; degenerate repeat unit spans residues 204-230 (PELIKELKLNTVGNLSKLAKFVPFIRK). The LRR 4; degenerate repeat unit spans residues 231–265 (MRNLQKLMLVRTFGTRTFTQEEKQNISKIISLFCK). LRR repeat units follow at residues 266–291 (LSCL…LRCL), 292–323 (EAPL…SQLK), 324–347 (HLCL…LKRV), 348–375 (AANL…ALIK), and 376–400 (CTQL…FLHR).

Belongs to the PRAME family. As to quaternary structure, interacts with UHRF1. As to expression, seems to be specific to pluripotent tissues in the early embryo. Not detected in somatic tissues.

Its function is as follows. Promotes maintenance and self-renewal of pluripotent embryonic stem cells (ESCs), downstream of LIF/STAT3. Maintains the pluripotency state of ESCs by repressing DNA methylation through the regulation of UHRF1 stability. Mediates the proteasomal degradation of UHRF1. Is required for the establishment of the blastocyst. In Mus musculus (Mouse), this protein is Preferentially expressed antigen in melanoma-like protein 7.